Consider the following 503-residue polypeptide: Arabinose import ATP-binding protein AraG (503 aa).

ABC transporter domains are found at residues 5–240 (LRFD…MVGR) and 253–497 (LGDV…LPQG). 37–44 (GENGAGKS) contributes to the ATP binding site.

The protein belongs to the ABC transporter superfamily. Arabinose importer (TC 3.A.1.2.2) family. The complex is composed of two ATP-binding proteins (AraG), two transmembrane proteins (AraH) and a solute-binding protein (AraF).

Its subcellular location is the cell inner membrane. The enzyme catalyses L-arabinose(out) + ATP + H2O = L-arabinose(in) + ADP + phosphate + H(+). Part of the ABC transporter complex AraFGH involved in arabinose import. Responsible for energy coupling to the transport system. This chain is Arabinose import ATP-binding protein AraG, found in Burkholderia pseudomallei (strain K96243).